Consider the following 307-residue polypeptide: Porphobilinogen deaminase (307 aa).

Cysteine 241 is modified (S-(dipyrrolylmethanemethyl)cysteine).

Belongs to the HMBS family. Monomer. Dipyrromethane is required as a cofactor.

The enzyme catalyses 4 porphobilinogen + H2O = hydroxymethylbilane + 4 NH4(+). The protein operates within porphyrin-containing compound metabolism; protoporphyrin-IX biosynthesis; coproporphyrinogen-III from 5-aminolevulinate: step 2/4. Functionally, tetrapolymerization of the monopyrrole PBG into the hydroxymethylbilane pre-uroporphyrinogen in several discrete steps. The polypeptide is Porphobilinogen deaminase (Macrococcus caseolyticus (strain JCSC5402) (Macrococcoides caseolyticum)).